The primary structure comprises 424 residues: Histidine--tRNA ligase (424 aa).

Belongs to the class-II aminoacyl-tRNA synthetase family. As to quaternary structure, homodimer.

The protein resides in the cytoplasm. It catalyses the reaction tRNA(His) + L-histidine + ATP = L-histidyl-tRNA(His) + AMP + diphosphate + H(+). This Marinomonas sp. (strain MWYL1) protein is Histidine--tRNA ligase.